The chain runs to 497 residues: Probable cytosol aminopeptidase (497 aa).

Mn(2+)-binding residues include K264 and D269. K276 is a catalytic residue. D287, D347, and E349 together coordinate Mn(2+). R351 is a catalytic residue.

It belongs to the peptidase M17 family. Mn(2+) serves as cofactor.

It is found in the cytoplasm. The enzyme catalyses Release of an N-terminal amino acid, Xaa-|-Yaa-, in which Xaa is preferably Leu, but may be other amino acids including Pro although not Arg or Lys, and Yaa may be Pro. Amino acid amides and methyl esters are also readily hydrolyzed, but rates on arylamides are exceedingly low.. The catalysed reaction is Release of an N-terminal amino acid, preferentially leucine, but not glutamic or aspartic acids.. Its function is as follows. Presumably involved in the processing and regular turnover of intracellular proteins. Catalyzes the removal of unsubstituted N-terminal amino acids from various peptides. In Thermosynechococcus vestitus (strain NIES-2133 / IAM M-273 / BP-1), this protein is Probable cytosol aminopeptidase.